The following is a 149-amino-acid chain: Flagellar assembly factor FliW (149 aa).

This sequence belongs to the FliW family. In terms of assembly, interacts with translational regulator CsrA and flagellin(s).

The protein resides in the cytoplasm. In terms of biological role, acts as an anti-CsrA protein, binds CsrA and prevents it from repressing translation of its target genes, one of which is flagellin. Binds to flagellin and participates in the assembly of the flagellum. This chain is Flagellar assembly factor FliW, found in Thermotoga petrophila (strain ATCC BAA-488 / DSM 13995 / JCM 10881 / RKU-1).